The primary structure comprises 215 residues: Programmed cell death protein 10 homolog (215 aa).

This sequence belongs to the PDCD10 family. As to quaternary structure, interacts with gck-1. Expressed in pharynx, intestine, germline, vulva and excretory canals.

The protein resides in the cytoplasm. It localises to the apical cell membrane. Its function is as follows. Involved in excretory canal elongation during postembryonic development. Plays a role in promoting Golgi stability, ER integrity and vesicle transport probably by regulating the activation of Rho GTPase cdc-42. Involved in fertility. The sequence is that of Programmed cell death protein 10 homolog from Caenorhabditis elegans.